The primary structure comprises 214 residues: Probable nicotinate-nucleotide adenylyltransferase (214 aa).

It belongs to the NadD family.

The enzyme catalyses nicotinate beta-D-ribonucleotide + ATP + H(+) = deamido-NAD(+) + diphosphate. The protein operates within cofactor biosynthesis; NAD(+) biosynthesis; deamido-NAD(+) from nicotinate D-ribonucleotide: step 1/1. Catalyzes the reversible adenylation of nicotinate mononucleotide (NaMN) to nicotinic acid adenine dinucleotide (NaAD). The chain is Probable nicotinate-nucleotide adenylyltransferase from Rubrobacter xylanophilus (strain DSM 9941 / JCM 11954 / NBRC 16129 / PRD-1).